A 462-amino-acid chain; its full sequence is Integrator complex subunit 12 (462 aa).

The segment at 39–132 (LARGIDSSYR…PETRSSPITV (94 aa)) is disordered. The segment covering 59–86 (ISSTKTVSVKQEPKTSSSLPSGNNNGKV) has biased composition (polar residues). Lys68 is covalently cross-linked (Glycyl lysine isopeptide (Lys-Gly) (interchain with G-Cter in SUMO2)). Basic and acidic residues predominate over residues 88–125 (TTEKVKKEGEKRPADKMKSDITEGADVPKKPRLEKPET). Residue Ser128 is modified to Phosphoserine. Residues 159-215 (GLACVVCRQMTVASGNQLVECQECHNLYHQDCHKPQVTDKEVTDPRLVWYCARCTRQ) form a PHD-type zinc finger. Lys254 participates in a covalent cross-link: Glycyl lysine isopeptide (Lys-Gly) (interchain with G-Cter in SUMO2). The segment covering 305 to 328 (PSTAKLSSAAQNNSGKPATSSANQ) has biased composition (polar residues). Residues 305-462 (PSTAKLSSAA…KKAAQKKLKK (158 aa)) are disordered. Composition is skewed to low complexity over residues 347–358 (KIGSSNSTSPTV) and 382–431 (VSKV…PSAS). Polar residues predominate over residues 434-443 (GPTSQESQLN). Over residues 449–462 (QMVKKKAAQKKLKK) the composition is skewed to basic residues.

It belongs to the Integrator subunit 12 family. Component of the Integrator complex, composed of core subunits INTS1, INTS2, INTS3, INTS4, INTS5, INTS6, INTS7, INTS8, INTS9/RC74, INTS10, INTS11/CPSF3L, INTS12, INTS13, INTS14 and INTS15. The core complex associates with protein phosphatase 2A subunits PPP2CA and PPP2R1A, to form the Integrator-PP2A (INTAC) complex. In terms of processing, dephosphorylated at Ser-128 by the PNUTS-PP1 complex, promoting RNA polymerase II transcription pause-release.

It localises to the nucleus. Functionally, component of the integrator complex, a multiprotein complex that terminates RNA polymerase II (Pol II) transcription in the promoter-proximal region of genes. The integrator complex provides a quality checkpoint during transcription elongation by driving premature transcription termination of transcripts that are unfavorably configured for transcriptional elongation: the complex terminates transcription by (1) catalyzing dephosphorylation of the C-terminal domain (CTD) of Pol II subunit POLR2A/RPB1 and SUPT5H/SPT5, (2) degrading the exiting nascent RNA transcript via endonuclease activity and (3) promoting the release of Pol II from bound DNA. The integrator complex is also involved in terminating the synthesis of non-coding Pol II transcripts, such as enhancer RNAs (eRNAs), small nuclear RNAs (snRNAs), telomerase RNAs and long non-coding RNAs (lncRNAs). Mediates recruitment of cytoplasmic dynein to the nuclear envelope, probably as component of the integrator complex. In Bos taurus (Bovine), this protein is Integrator complex subunit 12 (INTS12).